A 544-amino-acid polypeptide reads, in one-letter code: Apolipoprotein N-acyltransferase 1 (544 aa).

Helical transmembrane passes span 30 to 50 (LNLN…FLLL), 57 to 79 (FSFL…WIIF), 91 to 111 (KYCI…SYFS), 115 to 135 (FIFQ…GFLG), 157 to 177 (IFGV…SASF), and 197 to 217 (PMMI…FTKI). In terms of domain architecture, CN hydrolase spans 225 to 501 (ARIALVQPNR…KDILVADVTV (277 aa)). Catalysis depends on E272, which acts as the Proton acceptor. The active site involves K360. C412 acts as the Nucleophile in catalysis. A helical transmembrane segment spans residues 514 to 534 (GDFFGVLCTIVLILNLCFIII).

The protein belongs to the CN hydrolase family. Apolipoprotein N-acyltransferase subfamily.

The protein resides in the cell inner membrane. The enzyme catalyses N-terminal S-1,2-diacyl-sn-glyceryl-L-cysteinyl-[lipoprotein] + a glycerophospholipid = N-acyl-S-1,2-diacyl-sn-glyceryl-L-cysteinyl-[lipoprotein] + a 2-acyl-sn-glycero-3-phospholipid + H(+). It functions in the pathway protein modification; lipoprotein biosynthesis (N-acyl transfer). Catalyzes the phospholipid dependent N-acylation of the N-terminal cysteine of apolipoprotein, the last step in lipoprotein maturation. The sequence is that of Apolipoprotein N-acyltransferase 1 from Treponema denticola (strain ATCC 35405 / DSM 14222 / CIP 103919 / JCM 8153 / KCTC 15104).